The chain runs to 1726 residues: Probable serine/threonine-protein kinase roco4 (1726 aa).

LRR repeat units follow at residues 256–277 (KGKRLSLSRSNLSRFPMSITQM), 280–301 (HLVELDLSDNKITELPKDIQLL), 303–324 (SLRILILRGNLLEDIPLEICYL), and 326–347 (DLKILELQENPLNNFPLSVVQS). Residues 364–544 (KSETWNKVKL…KRLIHEAEKS (181 aa)) enclose the Roc domain. GTP-binding positions include 377-384 (GQEGVGKT), 428-432 (DFGGQ), and 487-490 (THSD). The COR domain maps to 591–787 (AINSQKERYI…RTYWRNGVLL (197 aa)). Over residues 800–881 (SKQQQLQQQQ…STLNSQQLIN (82 aa)) the composition is skewed to low complexity. The interval 800 to 890 (SKQQQLQQQQ…NPSVSPLSST (91 aa)) is disordered. Residues 1026-1292 (IEYEKQIGKG…SYIVKELSEL (267 aa)) enclose the Protein kinase domain. Residues 1032–1040 (IGKGGFGLV) and lysine 1055 contribute to the ATP site. Aspartate 1154 functions as the Proton acceptor in the catalytic mechanism. Over residues 1319 to 1331 (ASTSSNADDGSQT) the composition is skewed to polar residues. The disordered stretch occupies residues 1319-1385 (ASTSSNADDG…SSPSTSFINS (67 aa)). A compositionally biased stretch (low complexity) spans 1332–1348 (NNNNNNNNNNNNNNNNN). Over residues 1349-1364 (SGSSIALSPSRSFEQQ) the composition is skewed to polar residues. Over residues 1365 to 1381 (TTTTTTTTTSPSSPSTS) the composition is skewed to low complexity. WD repeat units lie at residues 1422 to 1461 (SVHKKMEVLAGVEAGETVWTKSADSSLCFWSTKKGHLINE), 1463 to 1502 (KCPHTVATTMMIKVGKYIWEATNSNGIYIWDMGTMTIVQQ), 1506 to 1546 (PHKG…KKHS), 1589 to 1627 (KHSTGSITSILAMKDEVWSGGSDGRIYIWKVKNEFELQK), 1633 to 1670 (AHHEKITSLIHLEDNVLSGSTDKCISLFKISDPKKPFT), and 1674 to 1714 (HHKQ…EKKT).

Belongs to the protein kinase superfamily. TKL Ser/Thr protein kinase family. ROCO subfamily.

The enzyme catalyses L-seryl-[protein] + ATP = O-phospho-L-seryl-[protein] + ADP + H(+). The catalysed reaction is L-threonyl-[protein] + ATP = O-phospho-L-threonyl-[protein] + ADP + H(+). In Dictyostelium discoideum (Social amoeba), this protein is Probable serine/threonine-protein kinase roco4 (roco4).